We begin with the raw amino-acid sequence, 290 residues long: Ribosomal RNA small subunit methyltransferase A (290 aa).

S-adenosyl-L-methionine is bound by residues Asn-27, Leu-29, Gly-54, Glu-75, Asp-100, and Asn-125.

Belongs to the class I-like SAM-binding methyltransferase superfamily. rRNA adenine N(6)-methyltransferase family. RsmA subfamily.

The protein localises to the cytoplasm. The enzyme catalyses adenosine(1518)/adenosine(1519) in 16S rRNA + 4 S-adenosyl-L-methionine = N(6)-dimethyladenosine(1518)/N(6)-dimethyladenosine(1519) in 16S rRNA + 4 S-adenosyl-L-homocysteine + 4 H(+). Specifically dimethylates two adjacent adenosines (A1518 and A1519) in the loop of a conserved hairpin near the 3'-end of 16S rRNA in the 30S particle. May play a critical role in biogenesis of 30S subunits. In Streptococcus pneumoniae (strain CGSP14), this protein is Ribosomal RNA small subunit methyltransferase A.